Reading from the N-terminus, the 473-residue chain is MGRTLYDKIWDEHVVHTEEDGTAILYIDRHLVHEVTSPQAFEGIRQAGRKVWRVSSIVATADHNTPTTGWERGYDGIEDPISKEQITTLDKNIAEVGAAAFFPFMSKRQGIVHVIGPENGATLPGMTVVCGDSHTSTHGAFGALAHGIGTSEVEHVMATQTLLAKKAKNMLIRVEGQVAPGVTAKDIVLAIIGKIGTAGGTGYTIEFAGPAIRALSMEGRMTVCNMAIEAGARAGLVAVDDKTIEYVKNRPLSPTGVEWDQAVAYWKTLHSDADAHFDTVVTLNGADIVPQVTWGTSPEMVLGVDASVPDPDKEKDPNKRSAIERALTYMALEPGKPLNDIFVDKVFIGSCTNSRIEDMREAAAVVKKLGRKVARNIKVAMVVPGSGLVKEQAEREGLDQVFKAAGFEWREPGCSMCLAMNADRLEPGERCASTSNRNFEGRQGAGGRTHLVSPAMAAAAAVHGHFVDIRKFA.

Cys-351, Cys-414, and Cys-417 together coordinate [4Fe-4S] cluster.

It belongs to the aconitase/IPM isomerase family. LeuC type 1 subfamily. Heterodimer of LeuC and LeuD. It depends on [4Fe-4S] cluster as a cofactor.

The enzyme catalyses (2R,3S)-3-isopropylmalate = (2S)-2-isopropylmalate. Its pathway is amino-acid biosynthesis; L-leucine biosynthesis; L-leucine from 3-methyl-2-oxobutanoate: step 2/4. Functionally, catalyzes the isomerization between 2-isopropylmalate and 3-isopropylmalate, via the formation of 2-isopropylmaleate. This Paracidovorax citrulli (strain AAC00-1) (Acidovorax citrulli) protein is 3-isopropylmalate dehydratase large subunit.